The primary structure comprises 492 residues: Catalase isozyme 2 (492 aa).

Residues 1–32 (MDPYKFRPSSSNDTPFWTTNAGDPVSNNNSSM) form a disordered region. Over residues 8 to 32 (PSSSNDTPFWTTNAGDPVSNNNSSM) the composition is skewed to polar residues. Active-site residues include His-65 and Asn-138. Tyr-348 serves as a coordination point for heme.

The protein belongs to the catalase family. In terms of assembly, homotetramer. It depends on heme as a cofactor. Abundant in hypocotyls and roots. Low levels are seen in the endosperms and cotyledons.

Its subcellular location is the peroxisome. The protein localises to the glyoxysome. The enzyme catalyses 2 H2O2 = O2 + 2 H2O. Occurs in almost all aerobically respiring organisms and serves to protect cells from the toxic effects of hydrogen peroxide. The protein is Catalase isozyme 2 (CAT2) of Ricinus communis (Castor bean).